Consider the following 393-residue polypeptide: Metal tolerance protein A2 (393 aa).

Topologically, residues methionine 1 to arginine 72 are cytoplasmic. The chain crosses the membrane as a helical span at residues lysine 73–isoleucine 93. The Vacuolar portion of the chain corresponds to lysine 94–alanine 105. A helical transmembrane segment spans residues histidine 106–tryptophan 126. At lysine 127–arginine 138 the chain is on the cytoplasmic side. A helical transmembrane segment spans residues isoleucine 139 to valine 159. At tyrosine 160–serine 176 the chain is on the vacuolar side. Residues leucine 177 to glycine 197 form a helical membrane-spanning segment. A required for zinc-binding region spans residues histidine 198–histidine 233. The Cytoplasmic segment spans residues histidine 198–tyrosine 257. The span at histidine 202–serine 236 shows a compositional bias: basic and acidic residues. Positions histidine 202–glutamine 237 are disordered. Residues leucine 258 to tryptophan 278 traverse the membrane as a helical segment. Over tyrosine 279–lysine 284 the chain is Vacuolar. A helical transmembrane segment spans residues isoleucine 285–methionine 305. At leucine 306–glutamine 393 the chain is on the cytoplasmic side.

This sequence belongs to the cation diffusion facilitator (CDF) transporter (TC 2.A.4) family. SLC30A subfamily.

The protein resides in the membrane. Its function is as follows. Involved in sequestration of excess zinc in the cytoplasm into vacuoles to maintain zinc homeostasis. This Arabidopsis thaliana (Mouse-ear cress) protein is Metal tolerance protein A2 (MTPA2).